The following is a 276-amino-acid chain: Shikimate dehydrogenase (NADP(+)) (276 aa).

Shikimate is bound by residues 19-21 (SKS) and Thr-66. Lys-70 functions as the Proton acceptor in the catalytic mechanism. Asp-82 serves as a coordination point for NADP(+). Asn-91 and Asp-107 together coordinate shikimate. NADP(+) is bound by residues 133–137 (GAGGA), 157–162 (NRTRSR), and Leu-222. Tyr-224 contacts shikimate. An NADP(+)-binding site is contributed by Gly-245.

It belongs to the shikimate dehydrogenase family. Homodimer.

The catalysed reaction is shikimate + NADP(+) = 3-dehydroshikimate + NADPH + H(+). The protein operates within metabolic intermediate biosynthesis; chorismate biosynthesis; chorismate from D-erythrose 4-phosphate and phosphoenolpyruvate: step 4/7. Functionally, involved in the biosynthesis of the chorismate, which leads to the biosynthesis of aromatic amino acids. Catalyzes the reversible NADPH linked reduction of 3-dehydroshikimate (DHSA) to yield shikimate (SA). In Ruegeria sp. (strain TM1040) (Silicibacter sp.), this protein is Shikimate dehydrogenase (NADP(+)).